We begin with the raw amino-acid sequence, 352 residues long: Maleylacetate reductase (352 aa).

It belongs to the iron-containing alcohol dehydrogenase family.

The enzyme catalyses 3-oxoadipate + NAD(+) = maleylacetate + NADH + H(+). It catalyses the reaction 3-oxoadipate + NADP(+) = maleylacetate + NADPH + H(+). Its pathway is aromatic compound metabolism; 3-chlorocatechol degradation. The polypeptide is Maleylacetate reductase (clcE) (Pseudomonas aeruginosa).